Here is a 402-residue protein sequence, read N- to C-terminus: 4-hydroxy-3-methylbut-2-en-1-yl diphosphate synthase (ferredoxin) (402 aa).

4 residues coordinate [4Fe-4S] cluster: C311, C314, C345, and E352.

Belongs to the IspG family. Requires [4Fe-4S] cluster as cofactor.

It carries out the reaction (2E)-4-hydroxy-3-methylbut-2-enyl diphosphate + 2 oxidized [2Fe-2S]-[ferredoxin] + H2O = 2-C-methyl-D-erythritol 2,4-cyclic diphosphate + 2 reduced [2Fe-2S]-[ferredoxin] + H(+). It participates in isoprenoid biosynthesis; isopentenyl diphosphate biosynthesis via DXP pathway; isopentenyl diphosphate from 1-deoxy-D-xylulose 5-phosphate: step 5/6. In terms of biological role, converts 2C-methyl-D-erythritol 2,4-cyclodiphosphate (ME-2,4cPP) into 1-hydroxy-2-methyl-2-(E)-butenyl 4-diphosphate, using ferredoxin I (PetF) as the reducing agent. The sequence is that of 4-hydroxy-3-methylbut-2-en-1-yl diphosphate synthase (ferredoxin) from Thermosynechococcus vestitus (strain NIES-2133 / IAM M-273 / BP-1).